A 332-amino-acid polypeptide reads, in one-letter code: RNA polymerase principal sigma factor HrdD (332 aa).

A compositionally biased stretch (basic residues) spans 1–11 (MATRAVARRKS). Residues 1 to 25 (MATRAVARRKSAAGETSGSATSVRA) are disordered. Over residues 13-22 (AGETSGSATS) the composition is skewed to low complexity. The Polymerase core binding motif lies at 124-137 (DLIQEGNAGLVRAV). Residues 294 to 313 (LTEVGKEHGLTRERIRQIEK) constitute a DNA-binding region (H-T-H motif).

The protein belongs to the sigma-70 factor family. Interacts transiently with the RNA polymerase catalytic core.

Sigma factors are initiation factors that promote the attachment of RNA polymerase to specific initiation sites and are then released. The protein is RNA polymerase principal sigma factor HrdD (hrdD) of Streptomyces coelicolor (strain ATCC BAA-471 / A3(2) / M145).